Here is a 295-residue protein sequence, read N- to C-terminus: GTPase Era (295 aa).

One can recognise an Era-type G domain in the interval 7-176 (KTVSVCIIGR…ITSKAKIAPW (170 aa)). A G1 region spans residues 15 to 22 (GRPNSGKS). Position 15-22 (15-22 (GRPNSGKS)) interacts with GTP. The segment at 41–45 (QTTRS) is G2. A G3 region spans residues 62 to 65 (DTPG). GTP-binding positions include 62–66 (DTPGI) and 124–127 (NKID). Positions 124–127 (NKID) are G4. Positions 152–154 (ISA) are G5. The KH type-2 domain maps to 204-281 (LQQELPYKLT…HLFLFVKVQE (78 aa)).

This sequence belongs to the TRAFAC class TrmE-Era-EngA-EngB-Septin-like GTPase superfamily. Era GTPase family. Monomer.

The protein resides in the cytoplasm. The protein localises to the cell inner membrane. In terms of biological role, an essential GTPase that binds both GDP and GTP, with rapid nucleotide exchange. Plays a role in 16S rRNA processing and 30S ribosomal subunit biogenesis and possibly also in cell cycle regulation and energy metabolism. This is GTPase Era from Rickettsia bellii (strain RML369-C).